Consider the following 397-residue polypeptide: Acetate kinase (397 aa).

Asn-8 serves as a coordination point for Mg(2+). Position 15 (Lys-15) interacts with ATP. Arg-89 contacts substrate. Asp-146 (proton donor/acceptor) is an active-site residue. Residues 206-210, 283-285, and 331-335 contribute to the ATP site; these read HVGNG, DMR, and GMGEN. A Mg(2+)-binding site is contributed by Glu-383.

This sequence belongs to the acetokinase family. As to quaternary structure, homodimer. Mg(2+) serves as cofactor. The cofactor is Mn(2+).

It localises to the cytoplasm. It catalyses the reaction acetate + ATP = acetyl phosphate + ADP. It functions in the pathway metabolic intermediate biosynthesis; acetyl-CoA biosynthesis; acetyl-CoA from acetate: step 1/2. Catalyzes the formation of acetyl phosphate from acetate and ATP. Can also catalyze the reverse reaction. This is Acetate kinase from Streptococcus agalactiae serotype III (strain NEM316).